The following is a 100-amino-acid chain: Small ribosomal subunit protein uS14c (100 aa).

It belongs to the universal ribosomal protein uS14 family. As to quaternary structure, part of the 30S ribosomal subunit.

Its subcellular location is the plastid. In terms of biological role, binds 16S rRNA, required for the assembly of 30S particles. The protein is Small ribosomal subunit protein uS14c of Cuscuta obtusiflora (Peruvian dodder).